Reading from the N-terminus, the 1305-residue chain is Contactin-associated protein like 5-1 (1305 aa).

The signal sequence occupies residues 1–24 (MDSLQRLNGLLTLVLSALWHLGLT). One can recognise an F5/8 type C domain in the interval 25-174 (ASNYNCDDPL…IGMRVEAYGC (150 aa)). Laminin G-like domains follow at residues 180–360 (VADF…TFSC) and 367–544 (PITF…IDLC). A glycan (N-linked (GlcNAc...) asparagine) is linked at Asn-282. A disulfide bridge links Cys-329 with Cys-360. An N-linked (GlcNAc...) asparagine glycan is attached at Asn-496. Intrachain disulfides connect Cys-512-Cys-544, Cys-550-Cys-561, and Cys-555-Cys-570. One can recognise an EGF-like 1 domain in the interval 546–583 (IKDRCLPNYCEHGGHCAQTWTTFYCNCSDTGYTGATCH). The N-linked (GlcNAc...) asparagine glycan is linked to Asn-571. Cys-572 and Cys-582 are disulfide-bonded. A Fibrinogen C-terminal domain is found at 584–790 (DSIYEQSCEV…LRCNGDRHFW (207 aa)). Asn-622 is a glycosylation site (N-linked (GlcNAc...) asparagine). The 166-residue stretch at 791-956 (NAVSFSTEAS…KLMSGVTPGC (166 aa)) folds into the Laminin G-like 3 domain. 4 cysteine pairs are disulfide-bonded: Cys-929/Cys-956, Cys-960/Cys-973, Cys-967/Cys-982, and Cys-984/Cys-994. Positions 957 to 995 (PGHCSSYSSNCHNGGKCVEKQSGYSCDCTNSPNEGPFCQ) constitute an EGF-like 2 domain. One can recognise a Laminin G-like 4 domain in the interval 1014–1198 (EPYLVIKNTS…VHGTLTESGC (185 aa)). Asn-1057 carries an N-linked (GlcNAc...) asparagine glycan. The cysteines at positions 1163 and 1198 are disulfide-linked. A helical membrane pass occupies residues 1238 to 1258 (VIGGIIAVVTFVTFCVIGIMI).

It belongs to the neurexin family.

It localises to the membrane. In terms of biological role, may play a role in the correct development and proper functioning of the peripheral and central nervous system and be involved in cell adhesion and intercellular communication. This chain is Contactin-associated protein like 5-1 (Cntnap5a), found in Rattus norvegicus (Rat).